The chain runs to 275 residues: WIMGHMVNPFEQVDEFLNLGANAIEFDIDFDENGIAKYTHHGIPCDCGRLCTKSAVFTEYLDYVRQVTSPGDPKFRKELVLLALDLKLQRISSEKAYAAGVDVATKLLDHYWKRGWNGGRAYILLNIPLVEDYEFIKGFKDTLRKEGHEQYNAKVGINFTGNEDLDEIRKVLEKLGEDEHIWQADGITSCFARGTDRLEKALEKRDTPGYKYISKVYAWTLVRSSIMRRSLRLGVDGVMSNNPDRVVKVLKEKEFANKFRLATYADNPWEKFTPI.

Residue His5 is part of the active site. Mg(2+) contacts are provided by Glu25 and Asp27. His41 acts as the Nucleophile in catalysis. 2 cysteine pairs are disulfide-bonded: Cys45–Cys51 and Cys47–Cys190. Asp85 is a Mg(2+) binding site.

This sequence belongs to the arthropod phospholipase D family. Class II subfamily. The cofactor is Mg(2+). In terms of tissue distribution, expressed by the venom gland.

It localises to the secreted. It catalyses the reaction an N-(acyl)-sphingosylphosphocholine = an N-(acyl)-sphingosyl-1,3-cyclic phosphate + choline. The catalysed reaction is an N-(acyl)-sphingosylphosphoethanolamine = an N-(acyl)-sphingosyl-1,3-cyclic phosphate + ethanolamine. The enzyme catalyses a 1-acyl-sn-glycero-3-phosphocholine = a 1-acyl-sn-glycero-2,3-cyclic phosphate + choline. It carries out the reaction a 1-acyl-sn-glycero-3-phosphoethanolamine = a 1-acyl-sn-glycero-2,3-cyclic phosphate + ethanolamine. In terms of biological role, dermonecrotic toxins cleave the phosphodiester linkage between the phosphate and headgroup of certain phospholipids (sphingolipid and lysolipid substrates), forming an alcohol (often choline) and a cyclic phosphate. This toxin acts on sphingomyelin (SM). It may also act on ceramide phosphoethanolamine (CPE), lysophosphatidylcholine (LPC) and lysophosphatidylethanolamine (LPE), but not on lysophosphatidylserine (LPS), and lysophosphatidylglycerol (LPG). It acts by transphosphatidylation, releasing exclusively cyclic phosphate products as second products. Induces dermonecrosis, hemolysis, increased vascular permeability, edema, inflammatory response, and platelet aggregation. This Sicarius patagonicus (Six-eyed sand spider) protein is Dermonecrotic toxin SpaSicTox-betaIIA1.